We begin with the raw amino-acid sequence, 205 residues long: Holliday junction branch migration complex subunit RuvA (205 aa).

Residues 1–63 (MIGMLRGHVE…QDAITLFGFG (63 aa)) form a domain I region. Positions 64-142 (TLASKRMFLQ…LSQIEGSSAT (79 aa)) are domain II. Residues 143–145 (AST) form a flexible linker region. A domain III region spans residues 146 to 205 (PEDTGAEQVVEGLMSLGWHQQDAAHAVQTVCADNQIETPLNAKDVPRVLKLALTSLDRGR).

This sequence belongs to the RuvA family. In terms of assembly, homotetramer. Forms an RuvA(8)-RuvB(12)-Holliday junction (HJ) complex. HJ DNA is sandwiched between 2 RuvA tetramers; dsDNA enters through RuvA and exits via RuvB. An RuvB hexamer assembles on each DNA strand where it exits the tetramer. Each RuvB hexamer is contacted by two RuvA subunits (via domain III) on 2 adjacent RuvB subunits; this complex drives branch migration. In the full resolvosome a probable DNA-RuvA(4)-RuvB(12)-RuvC(2) complex forms which resolves the HJ.

The protein resides in the cytoplasm. Its function is as follows. The RuvA-RuvB-RuvC complex processes Holliday junction (HJ) DNA during genetic recombination and DNA repair, while the RuvA-RuvB complex plays an important role in the rescue of blocked DNA replication forks via replication fork reversal (RFR). RuvA specifically binds to HJ cruciform DNA, conferring on it an open structure. The RuvB hexamer acts as an ATP-dependent pump, pulling dsDNA into and through the RuvAB complex. HJ branch migration allows RuvC to scan DNA until it finds its consensus sequence, where it cleaves and resolves the cruciform DNA. This Bifidobacterium adolescentis (strain ATCC 15703 / DSM 20083 / NCTC 11814 / E194a) protein is Holliday junction branch migration complex subunit RuvA.